Here is a 247-residue protein sequence, read N- to C-terminus: Potassium channel Ftrac_2467 (247 aa).

The next 6 membrane-spanning stretches (helical) occupy residues 23-44 (TRIE…VLSS), 56-78 (SMRD…YQHY), 89-117 (KVTI…RFLS), 142-165 (LKLL…LMYW), 187-210 (SIIA…IDPW), and 215-237 (TTIL…GRIT). A RxxxFSD motif motif is present at residues 24–30 (RIETFSD).

The protein belongs to the TMEM175 family. In terms of assembly, homotetramer.

The protein resides in the cell membrane. The catalysed reaction is K(+)(in) = K(+)(out). Potassium channel; forms a potassium-permeable leak-like channel with weak selectivity for potassium. The channel is permeable for K(+), Rb(+) and Cs(+). The chain is Potassium channel Ftrac_2467 from Marivirga tractuosa (strain ATCC 23168 / DSM 4126 / NBRC 15989 / NCIMB 1408 / VKM B-1430 / H-43) (Microscilla tractuosa).